Consider the following 156-residue polypeptide: Type II secretion system core protein G (156 aa).

Positions 1-22 are cleaved as a propeptide — leader sequence; sequence MQQSQRGCGQNSYGQSGYRQRG. Phenylalanine 23 is subject to N-methylphenylalanine. The chain crosses the membrane as a helical span at residues 23–43; it reads FTLLEIMVVIVILGVLASLVV.

The protein belongs to the GSP G family. In terms of assembly, type II secretion system is composed of four main components: the outer membrane complex, the inner membrane complex, the cytoplasmic secretion ATPase and the periplasm-spanning pseudopilus. Forms homomultimers. Post-translationally, cleaved by the prepilin peptidase. Methylated by prepilin peptidase at the amino group of the N-terminal phenylalanine once the leader sequence is cleaved.

Its subcellular location is the cell inner membrane. Functionally, core component of the type II secretion system required for the energy-dependent secretion of extracellular factors such as proteases and toxins from the periplasm. Pseudopilin (pilin-like) protein that polymerizes to form the pseudopilus. Further polymerization triggers pseudopilus growth. In Pectobacterium carotovorum subsp. carotovorum (Erwinia carotovora subsp. carotovora), this protein is Type II secretion system core protein G (outG).